The following is a 440-amino-acid chain: Glycerophosphocholine cholinephosphodiesterase ENPP6 (440 aa).

A signal peptide spans 1 to 22 (MAVKLGTLLLALALGLAQPASA). Substrate contacts are provided by Asp32, Ser71, and Asn92. Zn(2+) contacts are provided by Asp32 and Ser71. Ser71 serves as the catalytic Nucleophile. At Ser71 the chain carries Phosphoserine. 2 N-linked (GlcNAc...) asparagine glycosylation sites follow: Asn100 and Asn118. Cys142 and Cys154 form a disulfide bridge. Asp193 provides a ligand contact to substrate. Positions 193, 197, 240, and 241 each coordinate Zn(2+). His241 is a binding site for substrate. The N-linked (GlcNAc...) asparagine glycan is linked to Asn341. His354 lines the substrate pocket. Residue His354 participates in Zn(2+) binding. A glycan (N-linked (GlcNAc...) asparagine) is linked at Asn404. Ala418 carries the GPI-anchor amidated alanine lipid modification. A propeptide spans 419–440 (GTTPPVQPSHCALALILLFLLA) (removed in mature form).

It belongs to the nucleotide pyrophosphatase/phosphodiesterase family. As to quaternary structure, homodimer; disulfide-linked. Homotetramer. Zn(2+) serves as cofactor.

It is found in the cell membrane. The enzyme catalyses sn-glycerol 3-phosphocholine + H2O = phosphocholine + glycerol + H(+). The catalysed reaction is a 1-acyl-sn-glycero-3-phosphocholine + H2O = a 1-acyl-sn-glycerol + phosphocholine + H(+). It carries out the reaction a 1-O-alkyl-sn-glycero-3-phosphocholine + H2O = a 1-O-alkyl-sn-glycerol + phosphocholine + H(+). It catalyses the reaction 1-dodecanoyl-sn-glycero-3-phosphocholine + H2O = 1-dodecanoyl-sn-glycerol + phosphocholine + H(+). The enzyme catalyses 1-hexadecanoyl-sn-glycero-3-phosphocholine + H2O = 1-hexadecanoyl-sn-glycerol + phosphocholine + H(+). The catalysed reaction is 1-(5Z,8Z,11Z,14Z-eicosatetraenoyl)-sn-glycero-3-phosphocholine + H2O = 1-(5Z,8Z,11Z,14Z-eicosatetraenoyl)-sn-glycerol + phosphocholine + H(+). It carries out the reaction 1-tetradecanoyl-sn-glycero-3-phosphocholine + H2O = 1-tetradecanoyl-sn-glycerol + phosphocholine + H(+). It catalyses the reaction sphing-4-enine-phosphocholine + H2O = sphing-4-enine + phosphocholine + H(+). The enzyme catalyses 1-(9Z-octadecenoyl)-sn-glycero-3-phosphocholine + H2O = 1-(9Z-octadecenoyl)-sn-glycerol + phosphocholine + H(+). The catalysed reaction is 1-(9Z,12Z)-octadecadienoyl-sn-glycero-3-phosphocholine + H2O = 1-(9Z,12Z-octadecadienoyl)-sn-glycerol + phosphocholine + H(+). It carries out the reaction glycero-2-phosphocholine + H2O = phosphocholine + glycerol + H(+). Its activity is regulated as follows. Inhibited by EDTA and EGTA in vitro. In terms of biological role, choline-specific glycerophosphodiesterase that hydrolyzes glycerophosphocholine (GPC) and lysophosphatidylcholine (LPC) and contributes to supplying choline to the cells. Has a preference for LPC with short (12:0 and 14:0) or polyunsaturated (18:2 and 20:4) fatty acids. In vitro, hydrolyzes only choline-containing lysophospholipids, such as sphingosylphosphorylcholine (SPC), platelet-activating factor (PAF) and lysoPAF, but not other lysophospholipids. This Pongo abelii (Sumatran orangutan) protein is Glycerophosphocholine cholinephosphodiesterase ENPP6.